We begin with the raw amino-acid sequence, 129 residues long: Phosphoribosyl-AMP cyclohydrolase (129 aa).

Asp76 lines the Mg(2+) pocket. Zn(2+) is bound at residue Cys77. The Mg(2+) site is built by Asp78 and Asp80. 2 residues coordinate Zn(2+): Cys97 and Cys104.

This sequence belongs to the PRA-CH family. As to quaternary structure, homodimer. Mg(2+) is required as a cofactor. The cofactor is Zn(2+).

It is found in the cytoplasm. It carries out the reaction 1-(5-phospho-beta-D-ribosyl)-5'-AMP + H2O = 1-(5-phospho-beta-D-ribosyl)-5-[(5-phospho-beta-D-ribosylamino)methylideneamino]imidazole-4-carboxamide. It participates in amino-acid biosynthesis; L-histidine biosynthesis; L-histidine from 5-phospho-alpha-D-ribose 1-diphosphate: step 3/9. In terms of biological role, catalyzes the hydrolysis of the adenine ring of phosphoribosyl-AMP. The chain is Phosphoribosyl-AMP cyclohydrolase from Verminephrobacter eiseniae (strain EF01-2).